The chain runs to 316 residues: Biotin synthase (316 aa).

The region spanning 38-266 (YKGKKIELCA…DKDIRVCGGR (229 aa)) is the Radical SAM core domain. Residues cysteine 56, cysteine 60, and cysteine 63 each contribute to the [4Fe-4S] cluster site. Serine 100, cysteine 131, cysteine 191, and arginine 261 together coordinate [2Fe-2S] cluster.

The protein belongs to the radical SAM superfamily. Biotin synthase family. Homodimer. The cofactor is [4Fe-4S] cluster. [2Fe-2S] cluster is required as a cofactor.

The catalysed reaction is (4R,5S)-dethiobiotin + (sulfur carrier)-SH + 2 reduced [2Fe-2S]-[ferredoxin] + 2 S-adenosyl-L-methionine = (sulfur carrier)-H + biotin + 2 5'-deoxyadenosine + 2 L-methionine + 2 oxidized [2Fe-2S]-[ferredoxin]. Its pathway is cofactor biosynthesis; biotin biosynthesis; biotin from 7,8-diaminononanoate: step 2/2. Functionally, catalyzes the conversion of dethiobiotin (DTB) to biotin by the insertion of a sulfur atom into dethiobiotin via a radical-based mechanism. In Thermodesulfovibrio yellowstonii (strain ATCC 51303 / DSM 11347 / YP87), this protein is Biotin synthase.